Reading from the N-terminus, the 145-residue chain is Granulysin (145 aa).

The N-terminal stretch at 1 to 22 is a signal peptide; sequence MATWALLLLAAMLLGNPGLVFS. Residues 62 to 142 form the Saposin B-type domain; that stretch reads LGRDYRTCLT…EDLRLCIPST (81 aa). 2 disulfide bridges follow: cysteine 69/cysteine 132 and cysteine 96/cysteine 107.

In terms of processing, a 9 kDa form is produced by proteolytic processing of a 15 kDa protein. In terms of tissue distribution, expressed in natural killer and T-cells.

Its subcellular location is the secreted. Functionally, antimicrobial protein that kills intracellular pathogens. Active against a broad range of microbes, including Gram-positive and Gram-negative bacteria, fungi, and parasites. Kills Mycobacterium tuberculosis. This is Granulysin (GNLY) from Homo sapiens (Human).